Here is a 67-residue protein sequence, read N- to C-terminus: Peptide Ctry2606 (67 aa).

The signal sequence occupies residues 1–23 (MKTQTALFSFFLVLLLVATQTEG). Position 33 is a leucine amide (Leu-33). Residues 37 to 67 (ALRNQNFVDYAFDPSLSAADWRALETLLEEY) constitute a propeptide that is removed on maturation.

Belongs to the non-disulfide-bridged peptide (NDBP) superfamily. Short antimicrobial peptide (group 4) family. Expressed by the venom gland.

The protein resides in the secreted. In terms of biological role, antimicrobial peptide. In Chaerilus tryznai (Scorpion), this protein is Peptide Ctry2606.